We begin with the raw amino-acid sequence, 129 residues long: 8-oxo-dGTP diphosphatase (129 aa).

Residues 1–129 form the Nudix hydrolase domain; it reads MKKLQIAVGI…EPVIAKLKRL (129 aa). Residues Arg-23, His-28, and 34–37 each bind 8-oxo-dGTP; that span reads EFPG. Positions 37 and 57 each coordinate Mg(2+). A Nudix box motif is present at residues 38 to 59; that stretch reads GKIEMGETPEQAVVRELQEEVG. Asn-119 lines the 8-oxo-dGTP pocket.

The protein belongs to the Nudix hydrolase family. Monomer. It depends on Mg(2+) as a cofactor.

The enzyme catalyses 8-oxo-dGTP + H2O = 8-oxo-dGMP + diphosphate + H(+). It catalyses the reaction 8-oxo-GTP + H2O = 8-oxo-GMP + diphosphate + H(+). It carries out the reaction 8-oxo-dGDP + H2O = 8-oxo-dGMP + phosphate + H(+). The catalysed reaction is 8-oxo-GDP + H2O = 8-oxo-GMP + phosphate + H(+). Its function is as follows. Specifically hydrolyzes both 8-oxo-deoxyguanosine triphosphate (8-oxo-dGTP) and 8-oxo-guanosine triphosphate (8-oxo-GTP) to the related monophosphates, thereby cleaning up the nucleotide pools and preventing misincorporation of 8-oxoGua into DNA and RNA. It prevents replicational errors by removing an oxidatively damaged form of guanine (8-oxo-dGTP) from DNA and the nucleotide pool. 8-oxo-dGTP can be inserted opposite dA and dC residues of template DNA with almost equal efficiency thus leading to A.T to G.C transversions. MutT may also ensure transcriptional fidelity, removing 8-oxo-GTP from the ribonucleotide triphosphate pool. However, due to the lower efficiency of RNA polymerase 8-oxo-GTP incorporation, MutT is probably not a major contributor to transcriptional fidelity. It also hydrolyzes 8-oxo-dGDP and 8-oxo-GDP to their monophosphate form. In vitro, can also use dGTP, dGDP and other various nucleoside di- and triphosphates, with much lower efficiency. Works cooperatively with MutM and MutY to prevent accumulation in the DNA of oxidized guanine residues. This is 8-oxo-dGTP diphosphatase from Escherichia coli (strain K12).